A 474-amino-acid chain; its full sequence is Protein IFIT1 homolog B (474 aa).

10 TPR repeats span residues V52–E85, L95–F128, V141–N174, A182–D216, Y218–Q250, A251–S284, A305–F339, E340–E373, Q378–S412, and V437–L470.

Belongs to the IFIT family.

In terms of biological role, IFIT1B is likely non-functional, lacking the critical antiviral role of IFIT1. Unlike IFIT1, which is essential in the innate immune response as part of an interferon-dependent multiprotein complex, IFIT1B does not prevent the translation of viral RNAs that lack host-specific 2'-O-methylation at their 5' cap. Consequently, it probably cannot inhibit their translation by competing with the host translation machinery. The polypeptide is Protein IFIT1 homolog B (Homo sapiens (Human)).